We begin with the raw amino-acid sequence, 995 residues long: UPF0182 protein MMAR_1371 (995 aa).

Helical transmembrane passes span 18–38 (VLILIALGVIALLLAGPRLID), 63–83 (FLVFLVAGVLVGGIVFAGLAL), 113–133 (LFGIGIPAAIGLLAGIVAQSY), 175–195 (FVAIFLAFVANVVSHYLFGGI), 210–230 (IQLVSLVGVLVLLKAVAYWLD), 259–279 (KLILMAIAVICAAAVFSAIVL), and 287–307 (IGLVLLLLSSLIVGAAWPMIV). Residues 900–948 (AATGIQPTEGGAPANVPPNNAPSPEALPGTPPSPPTAVPPAPEASVTLS) are disordered. A compositionally biased stretch (pro residues) spans 928–941 (GTPPSPPTAVPPAP).

This sequence belongs to the UPF0182 family.

The protein resides in the cell membrane. In Mycobacterium marinum (strain ATCC BAA-535 / M), this protein is UPF0182 protein MMAR_1371.